The sequence spans 377 residues: Outer membrane porin N (377 aa).

A signal peptide spans 1-21 (MKSKVLALLIPALLAAGAAHA). A compositionally biased stretch (polar residues) spans 175 to 189 (NNEGASNGQEGTNNG). The disordered stretch occupies residues 175 to 196 (NNEGASNGQEGTNNGRDVRHEN).

Belongs to the Gram-negative porin family. Homotrimer.

Its subcellular location is the cell outer membrane. Functionally, forms pores that allow passive diffusion of small molecules across the outer membrane. Non-specific porin. The polypeptide is Outer membrane porin N (ompN) (Escherichia coli (strain K12)).